The primary structure comprises 224 residues: Protein GrpE (224 aa).

A disordered region spans residues Asn27–Glu77. Positions Glu31–Ser62 are enriched in acidic residues.

The protein belongs to the GrpE family. Homodimer.

The protein localises to the cytoplasm. Its function is as follows. Participates actively in the response to hyperosmotic and heat shock by preventing the aggregation of stress-denatured proteins, in association with DnaK and GrpE. It is the nucleotide exchange factor for DnaK and may function as a thermosensor. Unfolded proteins bind initially to DnaJ; upon interaction with the DnaJ-bound protein, DnaK hydrolyzes its bound ATP, resulting in the formation of a stable complex. GrpE releases ADP from DnaK; ATP binding to DnaK triggers the release of the substrate protein, thus completing the reaction cycle. Several rounds of ATP-dependent interactions between DnaJ, DnaK and GrpE are required for fully efficient folding. In Lachnoclostridium phytofermentans (strain ATCC 700394 / DSM 18823 / ISDg) (Clostridium phytofermentans), this protein is Protein GrpE.